Reading from the N-terminus, the 66-residue chain is uncharacterized protein (66 aa).

A helical membrane pass occupies residues 11-31; the sequence is PFPLLGVWIIVIIIVAVIGLL.

It is found in the membrane. This is an uncharacterized protein from Chenopodium amaranticolor (Quinoa).